Consider the following 190-residue polypeptide: Transcription antitermination protein NusB (190 aa).

Residues 135–190 are disordered; that stretch reads APAPESVAEEADEESSDSAAAASEPTDEGDVSDSPDSSGASDEPAAPSAEIQPTVD. Acidic residues predominate over residues 141 to 150; sequence VAEEADEESS.

This sequence belongs to the NusB family.

In terms of biological role, involved in transcription antitermination. Required for transcription of ribosomal RNA (rRNA) genes. Binds specifically to the boxA antiterminator sequence of the ribosomal RNA (rrn) operons. The sequence is that of Transcription antitermination protein NusB from Bifidobacterium longum (strain DJO10A).